We begin with the raw amino-acid sequence, 322 residues long: 4-diphosphocytidyl-2-C-methyl-D-erythritol kinase (322 aa).

Lysine 18 is an active-site residue. An ATP-binding site is contributed by proline 130–serine 140. Residue aspartate 172 is part of the active site.

It belongs to the GHMP kinase family. IspE subfamily.

The catalysed reaction is 4-CDP-2-C-methyl-D-erythritol + ATP = 4-CDP-2-C-methyl-D-erythritol 2-phosphate + ADP + H(+). It participates in isoprenoid biosynthesis; isopentenyl diphosphate biosynthesis via DXP pathway; isopentenyl diphosphate from 1-deoxy-D-xylulose 5-phosphate: step 3/6. In terms of biological role, catalyzes the phosphorylation of the position 2 hydroxy group of 4-diphosphocytidyl-2C-methyl-D-erythritol. This Psychrobacter cryohalolentis (strain ATCC BAA-1226 / DSM 17306 / VKM B-2378 / K5) protein is 4-diphosphocytidyl-2-C-methyl-D-erythritol kinase.